A 1830-amino-acid chain; its full sequence is Dedicator of cytokinesis protein 2 (1830 aa).

The 62-residue stretch at 8–69 (DKERHGVAIY…PKSFIHIKEV (62 aa)) folds into the SH3 domain. Lys304 is subject to N6-acetyllysine. A C2 DOCK-type domain is found at 423–607 (RNDIYITLLQ…DVFSISTLVC (185 aa)). Ser588 and Ser593 each carry phosphoserine. The residue at position 738 (Lys738) is an N6-acetyllysine. The interaction with CRKL stretch occupies residues 939 to 1476 (CMTAILNQMG…TSFVTAYKLP (538 aa)). Positions 1211–1622 (YKDNNREEMY…VEKEYGVREM (412 aa)) constitute a DOCKER domain. Positions 1651–1665 (MNSDCSTPSKPTSES) are enriched in polar residues. The interval 1651-1704 (MNSDCSTPSKPTSESFDLELASPKTPRVEQEEPISPGSTLPEVKLRRSKKRTKR) is disordered. A phosphoserine mark is found at Ser1685, Ser1706, Ser1731, and Ser1784.

This sequence belongs to the DOCK family. As to quaternary structure, homodimer. Interacts with RAC1 and RAC2. Interacts with CRKL and VAV. Interacts with CD3Z. As to expression, specifically expressed in hematopoietic cells. Highly expressed in peripheral blood leukocytes, and expressed at intermediate level in thymus and spleen. Expressed at very low level in the small intestine and colon.

The protein resides in the endomembrane system. The protein localises to the cytoplasm. It is found in the cytoskeleton. Functionally, involved in cytoskeletal rearrangements required for lymphocyte migration in response of chemokines. Activates RAC1 and RAC2, but not CDC42, by functioning as a guanine nucleotide exchange factor (GEF), which exchanges bound GDP for free GTP. May also participate in IL2 transcriptional activation via the activation of RAC2. This is Dedicator of cytokinesis protein 2 (DOCK2) from Homo sapiens (Human).